The primary structure comprises 361 residues: Peptide chain release factor 1 (361 aa).

The residue at position 235 (Gln235) is an N5-methylglutamine.

Belongs to the prokaryotic/mitochondrial release factor family. Methylated by PrmC. Methylation increases the termination efficiency of RF1.

It localises to the cytoplasm. Peptide chain release factor 1 directs the termination of translation in response to the peptide chain termination codons UAG and UAA. The protein is Peptide chain release factor 1 of Rhodopseudomonas palustris (strain BisB18).